We begin with the raw amino-acid sequence, 279 residues long: Small ribosomal subunit protein uS2 (279 aa).

Residues 255–279 (LLAGATTAAPEAAAGEAAAAPEQSS) are disordered.

It belongs to the universal ribosomal protein uS2 family.

The sequence is that of Small ribosomal subunit protein uS2 from Mycolicibacterium gilvum (strain PYR-GCK) (Mycobacterium gilvum (strain PYR-GCK)).